Consider the following 182-residue polypeptide: Adenylate kinase isoenzyme 6 homolog (182 aa).

Positions 1-20 (MATPETRRRPNILVTGSPGT) are disordered. ATP-binding residues include G19, G21, K22, S23, and T24. The NMPbind stretch occupies residues 39–62 (EVSKEVRENNLQGDFDEQYNCHVL). Positions 116–126 (SRGYSEFKIKE) are LID. R117 is a binding site for ATP.

It belongs to the adenylate kinase family. AK6 subfamily. In terms of assembly, monomer and homodimer. Interacts with small ribosomal subunit protein uS11. Not a structural component of 43S pre-ribosomes, but transiently interacts with them by binding to uS11.

Its subcellular location is the cytoplasm. It localises to the nucleus. It catalyses the reaction AMP + ATP = 2 ADP. The enzyme catalyses ATP + H2O = ADP + phosphate + H(+). Functionally, broad-specificity nucleoside monophosphate (NMP) kinase that catalyzes the reversible transfer of the terminal phosphate group between nucleoside triphosphates and monophosphates. Also has ATPase activity. Involved in the late cytoplasmic maturation steps of the 40S ribosomal particles, specifically 18S rRNA maturation. While NMP activity is not required for ribosome maturation, ATPase activity is. Associates transiently with small ribosomal subunit protein uS11. ATP hydrolysis breaks the interaction with uS11. May temporarily remove uS11 from the ribosome to enable a conformational change of the ribosomal RNA that is needed for the final maturation step of the small ribosomal subunit. Its NMP activity may have a role in nuclear energy homeostasis. AMP and dAMP are the preferred substrates, but CMP and TMP are also good substrates. ATP and dATP are the best phosphate donors. The polypeptide is Adenylate kinase isoenzyme 6 homolog (Caenorhabditis elegans).